The primary structure comprises 455 residues: Bifunctional protein GlmU (455 aa).

Residues 1 to 229 are pyrophosphorylase; it reads MSKKVMSVVI…LNEIEGINDG (229 aa). UDP-N-acetyl-alpha-D-glucosamine is bound by residues 11 to 14, K25, Q76, 81 to 82, 103 to 105, G140, E154, N169, and N227; these read LAAG, GT, and YGD. Residue D105 participates in Mg(2+) binding. Mg(2+) is bound at residue N227. The tract at residues 230–250 is linker; it reads LQLARLERLFQKQQAEKLLLS. The interval 251–455 is N-acetyltransferase; it reads GVRILDPARF…IQGWKRPKKT (205 aa). Residues R333 and K351 each coordinate UDP-N-acetyl-alpha-D-glucosamine. Catalysis depends on H363, which acts as the Proton acceptor. UDP-N-acetyl-alpha-D-glucosamine is bound by residues Y366 and N377. Acetyl-CoA contacts are provided by residues A380, 386–387, S405, A423, and R440; that span reads NY.

The protein in the N-terminal section; belongs to the N-acetylglucosamine-1-phosphate uridyltransferase family. This sequence in the C-terminal section; belongs to the transferase hexapeptide repeat family. In terms of assembly, homotrimer. It depends on Mg(2+) as a cofactor.

The protein localises to the cytoplasm. The catalysed reaction is alpha-D-glucosamine 1-phosphate + acetyl-CoA = N-acetyl-alpha-D-glucosamine 1-phosphate + CoA + H(+). It carries out the reaction N-acetyl-alpha-D-glucosamine 1-phosphate + UTP + H(+) = UDP-N-acetyl-alpha-D-glucosamine + diphosphate. It functions in the pathway nucleotide-sugar biosynthesis; UDP-N-acetyl-alpha-D-glucosamine biosynthesis; N-acetyl-alpha-D-glucosamine 1-phosphate from alpha-D-glucosamine 6-phosphate (route II): step 2/2. It participates in nucleotide-sugar biosynthesis; UDP-N-acetyl-alpha-D-glucosamine biosynthesis; UDP-N-acetyl-alpha-D-glucosamine from N-acetyl-alpha-D-glucosamine 1-phosphate: step 1/1. The protein operates within bacterial outer membrane biogenesis; LPS lipid A biosynthesis. In terms of biological role, catalyzes the last two sequential reactions in the de novo biosynthetic pathway for UDP-N-acetylglucosamine (UDP-GlcNAc). The C-terminal domain catalyzes the transfer of acetyl group from acetyl coenzyme A to glucosamine-1-phosphate (GlcN-1-P) to produce N-acetylglucosamine-1-phosphate (GlcNAc-1-P), which is converted into UDP-GlcNAc by the transfer of uridine 5-monophosphate (from uridine 5-triphosphate), a reaction catalyzed by the N-terminal domain. This Hamiltonella defensa subsp. Acyrthosiphon pisum (strain 5AT) protein is Bifunctional protein GlmU.